Reading from the N-terminus, the 100-residue chain is Large ribosomal subunit protein uL23 (100 aa).

It belongs to the universal ribosomal protein uL23 family. In terms of assembly, part of the 50S ribosomal subunit. Contacts protein L29, and trigger factor when it is bound to the ribosome.

Its function is as follows. One of the early assembly proteins it binds 23S rRNA. One of the proteins that surrounds the polypeptide exit tunnel on the outside of the ribosome. Forms the main docking site for trigger factor binding to the ribosome. The polypeptide is Large ribosomal subunit protein uL23 (Rippkaea orientalis (strain PCC 8801 / RF-1) (Cyanothece sp. (strain PCC 8801))).